We begin with the raw amino-acid sequence, 241 residues long: 6-hydroxymethyl-7,8-dihydropterin pyrophosphokinase (241 aa).

It belongs to the archaeal 6-HMPDK family. The cofactor is Mg(2+).

The catalysed reaction is 6-hydroxymethyl-7,8-dihydropterin + ATP = (7,8-dihydropterin-6-yl)methyl diphosphate + AMP + H(+). Its pathway is cofactor biosynthesis; 5,6,7,8-tetrahydromethanopterin biosynthesis. Catalyzes the transfer of diphosphate from ATP to 6-hydroxymethyl-7,8-dihydropterin (6-HMD), leading to 6-hydroxymethyl-7,8-dihydropterin diphosphate (6-HMDP). This is 6-hydroxymethyl-7,8-dihydropterin pyrophosphokinase from Methanocaldococcus jannaschii (strain ATCC 43067 / DSM 2661 / JAL-1 / JCM 10045 / NBRC 100440) (Methanococcus jannaschii).